The chain runs to 173 residues: UPF0102 protein Psyc_1908 (173 aa).

Belongs to the UPF0102 family.

The chain is UPF0102 protein Psyc_1908 from Psychrobacter arcticus (strain DSM 17307 / VKM B-2377 / 273-4).